The following is a 342-amino-acid chain: 4-amino-5-hydroxymethyl-2-methylpyrimidine phosphate synthase (342 aa).

N6-(pyridoxal phosphate)lysine is present on Lys-62. His-66 is a catalytic residue. 115–118 serves as a coordination point for pyridoxal 5'-phosphate; that stretch reads GEFG. The CCCFC; essential for catalytic activity, may be the site of iron coordination signature appears at 195-199; sequence CCCFC.

Belongs to the NMT1/THI5 family. Homodimer. The cofactor is Fe cation.

The catalysed reaction is N(6)-(pyridoxal phosphate)-L-lysyl-[4-amino-5-hydroxymethyl-2-methylpyrimidine phosphate synthase] + L-histidyl-[4-amino-5-hydroxymethyl-2-methylpyrimidine phosphate synthase] + 2 Fe(3+) + 4 H2O = L-lysyl-[4-amino-5-hydroxymethyl-2-methylpyrimidine phosphate synthase] + (2S)-2-amino-5-hydroxy-4-oxopentanoyl-[4-amino-5-hydroxymethyl-2-methylpyrimidine phosphate synthase] + 4-amino-2-methyl-5-(phosphooxymethyl)pyrimidine + 3-oxopropanoate + 2 Fe(2+) + 2 H(+). It functions in the pathway cofactor biosynthesis; thiamine diphosphate biosynthesis. Responsible for the formation of the pyrimidine heterocycle in the thiamine biosynthesis pathway. Catalyzes the formation of hydroxymethylpyrimidine phosphate (HMP-P) from histidine and pyridoxal phosphate (PLP). The protein uses PLP and the active site histidine to form HMP-P, generating an inactive enzyme. The enzyme can only undergo a single turnover, which suggests it is a suicide enzyme. The sequence is that of 4-amino-5-hydroxymethyl-2-methylpyrimidine phosphate synthase from Aspergillus parasiticus.